The chain runs to 305 residues: Methionyl-tRNA formyltransferase (305 aa).

111-114 (SILP) provides a ligand contact to (6S)-5,6,7,8-tetrahydrofolate.

It belongs to the Fmt family.

It catalyses the reaction L-methionyl-tRNA(fMet) + (6R)-10-formyltetrahydrofolate = N-formyl-L-methionyl-tRNA(fMet) + (6S)-5,6,7,8-tetrahydrofolate + H(+). In terms of biological role, attaches a formyl group to the free amino group of methionyl-tRNA(fMet). The formyl group appears to play a dual role in the initiator identity of N-formylmethionyl-tRNA by promoting its recognition by IF2 and preventing the misappropriation of this tRNA by the elongation apparatus. This is Methionyl-tRNA formyltransferase from Wolinella succinogenes (strain ATCC 29543 / DSM 1740 / CCUG 13145 / JCM 31913 / LMG 7466 / NCTC 11488 / FDC 602W) (Vibrio succinogenes).